Reading from the N-terminus, the 424-residue chain is Myb family transcription factor RLI1 (424 aa).

Residues 144–165 (RPQKRDSGERTPLPPPSQQQHQ) are disordered. Residues 238–298 (APSKTRIRWT…HLQKYRIAKY (61 aa)) enclose the HTH myb-type domain. A DNA-binding region (H-T-H motif) is located at residues 269–294 (PKGILKLMNSDGLTIYHIKSHLQKYR). The LHEQLE motif lies at 342–347 (LHEQLE). Residues 342-391 (LHEQLEIQRNLQLRIEEQGKRLQKMFEDQLKASRSVMEPQELDDVVAFAA) are a coiled coil.

Belongs to the MYB-CC family. In terms of assembly, homodimer. Interacts with PHR2 in the nucleus. Interacts with SPX1 and SPX2 in the nucleus; these interactions prevent binding to the promoters of target genes, thus regulating negatively leaf inclination in response to phosphate (Pi) starvation.

It is found in the nucleus. Its function is as follows. Transcription factor binding to specific DNA sequences of target genes promoters, such as the motif R1BS 5'-NAKATNCN-3' and the motif P1BS 5'-GNATATNC-3' to trigger their expression. Nitrate-induced component involved in modulating phosphate (Pi) response and homeostasis together with PHR2; activates directly the expression of Pi starvation-induced (PSI) genes upon nitrate disponibility, thus triggering the nitrate-induced phosphate response (NIPR) promoting Pi uptake activity. Involved in the shoot architecture; positively regulates leaf inclination by affecting lamina joint cell elongation via the direct promotion of ILI4/BU1 and BC1 genes expression, especially in response to phosphate (Pi) availability. Regulates both brassinolide (BL) biosynthesis and signaling by directly activating BL-biosynthesis and signaling genes. This chain is Myb family transcription factor RLI1, found in Oryza sativa subsp. indica (Rice).